An 88-amino-acid polypeptide reads, in one-letter code: Large ribosomal subunit protein bL27 (88 aa).

The protein belongs to the bacterial ribosomal protein bL27 family.

The chain is Large ribosomal subunit protein bL27 from Parabacteroides distasonis (strain ATCC 8503 / DSM 20701 / CIP 104284 / JCM 5825 / NCTC 11152).